The sequence spans 239 residues: LexA repressor (239 aa).

A DNA-binding region (H-T-H motif) is located at residues 26-46; that stretch reads FDEMKDALDLASKSGIHRLIT. The tract at residues 80-108 is disordered; that stretch reads RRGFSPSVIEGSLGKPQPAAAPAPAKPVA. Catalysis depends on for autocatalytic cleavage activity residues serine 159 and lysine 197.

It belongs to the peptidase S24 family. Homodimer.

It carries out the reaction Hydrolysis of Ala-|-Gly bond in repressor LexA.. Represses a number of genes involved in the response to DNA damage (SOS response), including recA and lexA. In the presence of single-stranded DNA, RecA interacts with LexA causing an autocatalytic cleavage which disrupts the DNA-binding part of LexA, leading to derepression of the SOS regulon and eventually DNA repair. The protein is LexA repressor of Rhizobium leguminosarum bv. trifolii (strain WSM2304).